The following is a 152-amino-acid chain: Large ribosomal subunit protein bL9 (152 aa).

It belongs to the bacterial ribosomal protein bL9 family.

Its function is as follows. Binds to the 23S rRNA. The chain is Large ribosomal subunit protein bL9 from Crocosphaera subtropica (strain ATCC 51142 / BH68) (Cyanothece sp. (strain ATCC 51142)).